The primary structure comprises 522 residues: FAD-dependent monooxygenase fsr3 (522 aa).

Positions 1-27 are disordered; sequence MKNTQTNGTHPIIDKKPNGTLNGDHQE. Arg-164 serves as a coordination point for FAD. Arg-245 is a catalytic residue. FAD is bound by residues Asp-369 and Ala-382.

It belongs to the paxM FAD-dependent monooxygenase family. The cofactor is FAD.

The protein operates within polyketide biosynthesis. Functionally, FAD-dependent monooxygenase; part of the gene cluster that mediates the biosynthesis of fusarubins, highly pigmented naphthoquinones responsible for the coloration of the fruiting bodies. The non-reducing polyketide synthase FSR1 is responsible for the condensation of seven acetyl-CoA units to yield a haptaketide. After rings A and B are formed by aldol-type cyclization, the PKS-derived product is released as 6-O-demethylfusarubinaldehyde. Then, two hydroxyl groups at C-5 and C-10 are incorporated by FSR3, and simultaneously hydroxyl groups at C-6 and C-8 are methylated by FSR2. The aldehyde is, on the one hand, reduced by FSR3 to 8-O-methylfusarubin alcohol, which equilibrates mainly with 8-O-methylfusarubin and only small amounts of 8-O-methylnectriafurone. On the other hand, the aldehyde can be oxidized to form 8-O-methylfusarubinic acid, a reaction driven by FSR3 equilibrating with 8-O-methylfusarubinlactone, finally resulting in 8-O-methylanhydrofusarubinlactol after a further reduction step and loss of water. 8-O-Methylfusarubinic acid can also undergo decarboxylation, resulting in 8-O-methyl-13-hydroxynorjavanicin after another hydroxylation step at C-13. Both steps are most likely also accomplished by FSR3. No enzymatic function has been determined so far for either FSR4 and FSR5. Their deletion does not alter the product spectrum, but the possibility that they catalyze specific enzymatic steps during perithecium development cannot be ruled out. FSR4 might possess a regulatory function in the biosynthesis of fusarubins. In Gibberella fujikuroi (strain CBS 195.34 / IMI 58289 / NRRL A-6831) (Bakanae and foot rot disease fungus), this protein is FAD-dependent monooxygenase fsr3.